The following is a 329-amino-acid chain: MAP kinase-activated protein kinase 2 (329 aa).

ATP is bound by residues 1–7 (LGINGKV) and lysine 22. Residues 1 to 254 (LGINGKVLRI…ITEFMNHPWI (254 aa)) enclose the Protein kinase domain. 68-70 (ECL) contacts staurosporine. Aspartate 115 serves as the catalytic Proton acceptor. Position 151 is a phosphothreonine; by MAPK14 (threonine 151). Phosphoserine; by MAPK14 is present on serine 201. The residue at position 257 (serine 257) is a Phosphoserine; by autocatalysis. Residues 257–293 (STKVPQTPLHTSRVLKEDKERWEDVKEEMTSALATMR) form an autoinhibitory helix region. Threonine 263 is subject to Phosphothreonine; by MAPK14. Lysine 282 is covalently cross-linked (Glycyl lysine isopeptide (Lys-Gly) (interchain with G-Cter in SUMO)). The short motif at 285-294 (MTSALATMRV) is the Nuclear export signal (NES) element. The interval 295–319 (DYEQIKIKKIEDASNPLLLKRRKKA) is p38 MAPK-binding site. Short sequence motifs (bipartite nuclear localization signal) lie at residues 300–303 (KIKK) and 314–318 (KRRKK).

This sequence belongs to the protein kinase superfamily. CAMK Ser/Thr protein kinase family. In terms of assembly, heterodimer with p38-alpha/MAPK14; this heterodimer forms a stable complex: molecules are positioned 'face to face' so that the ATP-binding sites of both kinases are at the heterodimer interface. Interacts with PHC2. Interacts with HSF1. Sumoylation inhibits the protein kinase activity. In terms of processing, phosphorylated and activated by MAP kinase p38-alpha/MAPK14 at Thr-151, Ser-201 and Thr-263.

It localises to the cytoplasm. It is found in the nucleus. It catalyses the reaction L-seryl-[protein] + ATP = O-phospho-L-seryl-[protein] + ADP + H(+). The catalysed reaction is L-threonyl-[protein] + ATP = O-phospho-L-threonyl-[protein] + ADP + H(+). Its activity is regulated as follows. Activated following phosphorylation by p38-alpha/MAPK14 following various stresses. Inhibited following sumoylation. Specifically inhibited by pyrrolopyridine inhibitors. Stress-activated serine/threonine-protein kinase involved in cytokine production, endocytosis, reorganization of the cytoskeleton, cell migration, cell cycle control, chromatin remodeling, DNA damage response and transcriptional regulation. Following stress, it is phosphorylated and activated by MAP kinase p38-alpha/MAPK14, leading to phosphorylation of substrates. Phosphorylates serine in the peptide sequence, Hyd-X-R-X(2)-S, where Hyd is a large hydrophobic residue. Phosphorylates ALOX5, CDC25B, CDC25C, CEP131, ELAVL1, HNRNPA0, HSP27/HSPB1, KRT18, KRT20, LIMK1, LSP1, PABPC1, PARN, PDE4A, RCSD1, RPS6KA3, TAB3 and TTP/ZFP36. Phosphorylates HSF1; leading to the interaction with HSP90 proteins and inhibiting HSF1 homotrimerization, DNA-binding and transactivation activities. Mediates phosphorylation of HSP27/HSPB1 in response to stress, leading to the dissociation of HSP27/HSPB1 from large small heat-shock protein (sHsps) oligomers and impairment of their chaperone activities and ability to protect against oxidative stress effectively. Involved in inflammatory response by regulating tumor necrosis factor (TNF) and IL6 production post-transcriptionally: acts by phosphorylating AU-rich elements (AREs)-binding proteins ELAVL1, HNRNPA0, PABPC1 and TTP/ZFP36, leading to regulation of the stability and translation of TNF and IL6 mRNAs. Phosphorylation of TTP/ZFP36, a major post-transcriptional regulator of TNF, promotes its binding to 14-3-3 proteins and reduces its ARE mRNA affinity, leading to inhibition of dependent degradation of ARE-containing transcripts. Phosphorylates CEP131 in response to cellular stress following ultraviolet irradiation which promotes binding of CEP131 to 14-3-3 proteins and inhibits formation of novel centriolar satellites. Also involved in late G2/M checkpoint following DNA damage through a process of post-transcriptional mRNA stabilization: following DNA damage, relocalizes from nucleus to cytoplasm and phosphorylates HNRNPA0 and PARN, leading to stabilization of GADD45A mRNA. Involved in toll-like receptor signaling pathway (TLR) in dendritic cells: required for acute TLR-induced macropinocytosis by phosphorylating and activating RPS6KA3. The polypeptide is MAP kinase-activated protein kinase 2 (MAPKAPK2) (Cricetulus longicaudatus (Long-tailed dwarf hamster)).